The chain runs to 429 residues: Alpha-L-rhamnosidase rgxB (429 aa).

The N-terminal stretch at 1 to 20 is a signal peptide; the sequence is MAPIALKILLFTSLIVPSIS. N-linked (GlcNAc...) asparagine glycosylation is found at Asn-67, Asn-77, Asn-97, Asn-103, Asn-112, Asn-135, and Asn-219. One copy of the PbH1 1 repeat lies at 217–238; it reads SKNITLTNWEVVNGDDSISTKA. The active-site Proton donor is the Asp-231. N-linked (GlcNAc...) asparagine glycans are attached at residues Asn-239, Asn-247, Asn-278, and Asn-344. PbH1 repeat units lie at residues 240-260 and 271-292; these read STDI…AIGS and VERL…YFKT. Cys-374 and Cys-380 are disulfide-bonded. 3 N-linked (GlcNAc...) asparagine glycosylation sites follow: Asn-387, Asn-395, and Asn-414.

It belongs to the glycosyl hydrolase 28 family.

The protein localises to the secreted. The catalysed reaction is Hydrolysis of terminal non-reducing alpha-L-rhamnose residues in alpha-L-rhamnosides.. Functionally, alpha-L-rhamnosidase which is able to degrade p-nitrophenyl-alpha-L-rhamnopyranoside (pnp_Rha). The natural substrate of this enzyme has not been identified yet. The sequence is that of Alpha-L-rhamnosidase rgxB (rgxB) from Aspergillus niger (strain ATCC MYA-4892 / CBS 513.88 / FGSC A1513).